The primary structure comprises 128 residues: MLRFVPRRLAIGAYTLFMMEQKNNPKLKGLKIADRGKMTSKLYKALNPNDKAALEKRAAAHPGFKRKEKEPKELKAAKAAKTSTPRAPSEYAKFVQANIGRFEKLPHLDRMKAVAKLWKQQQMRTGKP.

Residues 1–10 (MLRFVPRRLA) constitute a propeptide that is removed on maturation. Residues 60-87 (AHPGFKRKEKEPKELKAAKAAKTSTPRA) form a disordered region. Residues 65–76 (KRKEKEPKELKA) show a composition bias toward basic and acidic residues.

This sequence belongs to the KAP family. In terms of assembly, associates with the kinetoplast DNA network.

The protein localises to the mitochondrion matrix. It is found in the kinetoplast. Functionally, histone H1-like DNA-binding protein involved in the organization and segregation of kinetoplast DNA (kDNA). The mitochondrial DNA of kinetoplastid protozoa consists of about 5,000 minicircles and 20 to 30 maxicircles. These circular DNAs are held together by catenation into a highly organized compact disk structure referred to as a kinetoplast DNA (kDNA) network. Binds preferentially to a specific fragment of minicircle DNA and is able to compact kDNA networks through DNA charge neutralization and condensation. This is Kinetoplast-associated protein 4 (KAP4) from Crithidia fasciculata.